The primary structure comprises 182 residues: Endoribonuclease YbeY (182 aa).

The Zn(2+) site is built by His115, His119, and His125.

It belongs to the endoribonuclease YbeY family. It depends on Zn(2+) as a cofactor.

The protein resides in the cytoplasm. Single strand-specific metallo-endoribonuclease involved in late-stage 70S ribosome quality control and in maturation of the 3' terminus of the 16S rRNA. This is Endoribonuclease YbeY from Bifidobacterium longum (strain NCC 2705).